A 165-amino-acid chain; its full sequence is Interferon gamma (165 aa).

A signal peptide spans 1–23 (MKYTSYILAFQLCIVLGSLGCYC). Residue Gln24 is modified to Pyrrolidone carboxylic acid. Asn48 and Asn120 each carry an N-linked (GlcNAc...) asparagine glycan.

Belongs to the type II (or gamma) interferon family. Homodimer. Interacts with IFNGR1 (via extracellular domain); this interaction promotes IFNGR1 dimerization. As to expression, released primarily from activated T lymphocytes.

The protein localises to the secreted. In terms of biological role, type II interferon produced by immune cells such as T-cells and NK cells that plays crucial roles in antimicrobial, antiviral, and antitumor responses by activating effector immune cells and enhancing antigen presentation. Primarily signals through the JAK-STAT pathway after interaction with its receptor IFNGR1 to affect gene regulation. Upon IFNG binding, IFNGR1 intracellular domain opens out to allow association of downstream signaling components JAK2, JAK1 and STAT1, leading to STAT1 activation, nuclear translocation and transcription of IFNG-regulated genes. Many of the induced genes are transcription factors such as IRF1 that are able to further drive regulation of a next wave of transcription. Plays a role in class I antigen presentation pathway by inducing a replacement of catalytic proteasome subunits with immunoproteasome subunits. In turn, increases the quantity, quality, and repertoire of peptides for class I MHC loading. Increases the efficiency of peptide generation also by inducing the expression of activator PA28 that associates with the proteasome and alters its proteolytic cleavage preference. Up-regulates as well MHC II complexes on the cell surface by promoting expression of several key molecules such as cathepsins B/CTSB, H/CTSH, and L/CTSL. Participates in the regulation of hematopoietic stem cells during development and under homeostatic conditions by affecting their development, quiescence, and differentiation. The protein is Interferon gamma (IFNG) of Cercocebus atys (Sooty mangabey).